A 1118-amino-acid chain; its full sequence is Protein translocase subunit SecA (1118 aa).

ATP-binding positions include Gln-176, 194–198, and Asp-693; that span reads GEGKT. Residues 1034–1056 are disordered; that stretch reads QQPVQQPKYRETKDEAGSAFGGG.

It belongs to the SecA family. Monomer and homodimer. Part of the essential Sec protein translocation apparatus which comprises SecA, SecYEG and auxiliary proteins SecDF. Other proteins may also be involved.

It localises to the cell inner membrane. Its subcellular location is the cytoplasm. It catalyses the reaction ATP + H2O + cellular proteinSide 1 = ADP + phosphate + cellular proteinSide 2.. Functionally, part of the Sec protein translocase complex. Interacts with the SecYEG preprotein conducting channel. Has a central role in coupling the hydrolysis of ATP to the transfer of proteins into and across the cell membrane, serving as an ATP-driven molecular motor driving the stepwise translocation of polypeptide chains across the membrane. This is Protein translocase subunit SecA from Cytophaga hutchinsonii (strain ATCC 33406 / DSM 1761 / CIP 103989 / NBRC 15051 / NCIMB 9469 / D465).